A 206-amino-acid chain; its full sequence is Imidazoleglycerol-phosphate dehydratase (206 aa).

The protein belongs to the imidazoleglycerol-phosphate dehydratase family.

It is found in the cytoplasm. The enzyme catalyses D-erythro-1-(imidazol-4-yl)glycerol 3-phosphate = 3-(imidazol-4-yl)-2-oxopropyl phosphate + H2O. It functions in the pathway amino-acid biosynthesis; L-histidine biosynthesis; L-histidine from 5-phospho-alpha-D-ribose 1-diphosphate: step 6/9. This chain is Imidazoleglycerol-phosphate dehydratase, found in Cutibacterium acnes (strain DSM 16379 / KPA171202) (Propionibacterium acnes).